A 422-amino-acid polypeptide reads, in one-letter code: MSHLFSKACQYFPGGVNSPVRACRAVNITPPIVARASKEVFIDSLDKTFIDFCGSWGSLIHGHSHPKICAAIRQGLERGSSYGLTSEQEILFAEEIFSYLGLETNYKIRFMSTGSEATMTAVRLARGITGRPIIIKFLGCYHGHADTFLQEKPFSHTSLDTLDLAHPLTLSLPFNDFPLFQTVMNSLGHKVAGVIFEPVCANMGVILPVPDFIEGVIQTCQQTGSFSIMDEVVTGFRVAQGGAAALYHVKPDILVFGKILGGGLPASAVVAPKDIMDHLAPEGKIFQAGTLSGNPLAMIAGKVSVNLCREQGFYTQLATIEQNFLSPIEHMIRTTGIPVTLVRYGSLFSFFFNPNRPNNLADAQLSDIEAFQKFYQSAFSKGVYLSPSPFEASFLSAAHSMESLDYAQTALIESLEQVFSLV.

Lysine 258 bears the N6-(pyridoxal phosphate)lysine mark.

The protein belongs to the class-III pyridoxal-phosphate-dependent aminotransferase family. HemL subfamily. Homodimer. The cofactor is pyridoxal 5'-phosphate.

It is found in the cytoplasm. The enzyme catalyses (S)-4-amino-5-oxopentanoate = 5-aminolevulinate. It participates in porphyrin-containing compound metabolism; protoporphyrin-IX biosynthesis; 5-aminolevulinate from L-glutamyl-tRNA(Glu): step 2/2. This Chlamydia trachomatis serovar L2 (strain ATCC VR-902B / DSM 19102 / 434/Bu) protein is Glutamate-1-semialdehyde 2,1-aminomutase.